A 249-amino-acid chain; its full sequence is Leucyl/phenylalanyl-tRNA--protein transferase (249 aa).

This sequence belongs to the L/F-transferase family.

It localises to the cytoplasm. The catalysed reaction is N-terminal L-lysyl-[protein] + L-leucyl-tRNA(Leu) = N-terminal L-leucyl-L-lysyl-[protein] + tRNA(Leu) + H(+). The enzyme catalyses N-terminal L-arginyl-[protein] + L-leucyl-tRNA(Leu) = N-terminal L-leucyl-L-arginyl-[protein] + tRNA(Leu) + H(+). It carries out the reaction L-phenylalanyl-tRNA(Phe) + an N-terminal L-alpha-aminoacyl-[protein] = an N-terminal L-phenylalanyl-L-alpha-aminoacyl-[protein] + tRNA(Phe). Functionally, functions in the N-end rule pathway of protein degradation where it conjugates Leu, Phe and, less efficiently, Met from aminoacyl-tRNAs to the N-termini of proteins containing an N-terminal arginine or lysine. This is Leucyl/phenylalanyl-tRNA--protein transferase from Cupriavidus metallidurans (strain ATCC 43123 / DSM 2839 / NBRC 102507 / CH34) (Ralstonia metallidurans).